The following is a 268-amino-acid chain: Phosphatidylglycerol--prolipoprotein diacylglyceryl transferase (268 aa).

Transmembrane regions (helical) follow at residues 14 to 34 (LGPI…FAGW), 57 to 77 (LTFY…IIFY), 90 to 110 (FFLW…LIAF), and 117 to 137 (IGAN…IGLG). An a 1,2-diacyl-sn-glycero-3-phospho-(1'-sn-glycerol)-binding site is contributed by arginine 140. Helical transmembrane passes span 174 to 194 (QLFE…LVTI), 200 to 220 (YLVL…CEFF), and 238 to 258 (GQIL…AVFI).

It belongs to the Lgt family.

Its subcellular location is the cell inner membrane. It catalyses the reaction L-cysteinyl-[prolipoprotein] + a 1,2-diacyl-sn-glycero-3-phospho-(1'-sn-glycerol) = an S-1,2-diacyl-sn-glyceryl-L-cysteinyl-[prolipoprotein] + sn-glycerol 1-phosphate + H(+). Its pathway is protein modification; lipoprotein biosynthesis (diacylglyceryl transfer). Catalyzes the transfer of the diacylglyceryl group from phosphatidylglycerol to the sulfhydryl group of the N-terminal cysteine of a prolipoprotein, the first step in the formation of mature lipoproteins. This Francisella tularensis subsp. novicida (strain U112) protein is Phosphatidylglycerol--prolipoprotein diacylglyceryl transferase.